The sequence spans 469 residues: Glutamine synthetase (469 aa).

Positions 13–97 (HEVKFVDLRF…IRCDILEPGT (85 aa)) constitute a GS beta-grasp domain. The region spanning 105 to 469 (PRSIAKRAED…PVEFELYYSV (365 aa)) is the GS catalytic domain. Residues E130 and E132 each contribute to the Mg(2+) site. ATP is bound at residue E208. Positions 213 and 221 each coordinate Mg(2+). Residues 265 to 266 (NG) and G266 each bind L-glutamate. H270 serves as a coordination point for Mg(2+). ATP is bound by residues 272–274 (HMS) and S274. R322, E328, and R340 together coordinate L-glutamate. 3 residues coordinate ATP: R340, R345, and K353. E358 contacts Mg(2+). R360 contacts L-glutamate. Y398 is subject to O-AMP-tyrosine.

This sequence belongs to the glutamine synthetase family. Oligomer of 12 subunits arranged in the form of two hexagons. It depends on Mn(2+) as a cofactor.

The protein localises to the cytoplasm. It carries out the reaction L-glutamate + NH4(+) + ATP = L-glutamine + ADP + phosphate + H(+). When cellular nitrogen levels are high, the C-terminal adenylyl transferase (AT) of GlnE inhibits GlnA by covalent transfer of an adenylyl group from ATP to Tyr-398. Conversely, when nitrogen levels are low, the N-terminal adenylyl removase (AR) of GlnE activates GlnA by removing the adenylyl group by phosphorolysis. The fully adenylated enzyme complex is inactive. Its function is as follows. Catalyzes the ATP-dependent biosynthesis of glutamine from glutamate and ammonia. This is Glutamine synthetase from Salmonella typhi.